A 596-amino-acid chain; its full sequence is Sensor protein ChvG (596 aa).

The segment at 1 to 22 (MLKKTPETVSDSDDAEERGSER) is disordered. The Cytoplasmic segment spans residues 1 to 47 (MLKKTPETVSDSDDAEERGSERRHRIHPLTIIRRIFGNAVFSSLTRR). The chain crosses the membrane as a helical span at residues 48–68 (ILFFNVAATVVLVGGILYLNQ). Topologically, residues 69–283 (FREGLIDARV…VHAERLAIMR (215 aa)) are periplasmic. Residues 284–304 (VFGIATLVNIVLSLLLSSTIA) form a helical membrane-spanning segment. One can recognise an HAMP domain in the interval 301-356 (STIATPLRRLSAAAIRVRRGARTREEIPDFSARQDEIGNLSIALREMTTALYDRID). Topologically, residues 305–596 (TPLRRLSAAA…SLPAAETHER (292 aa)) are cytoplasmic. Residues 364–592 (DVSHELKNPL…RFTLSLPAAE (229 aa)) enclose the Histidine kinase domain. His-367 bears the Phosphohistidine mark.

It is found in the cell inner membrane. The enzyme catalyses ATP + protein L-histidine = ADP + protein N-phospho-L-histidine.. Functionally, member of a two-component regulatory system ChvG/ChvI. Activates ChvI by phosphorylation (Potential). The polypeptide is Sensor protein ChvG (chvG) (Agrobacterium fabrum (strain C58 / ATCC 33970) (Agrobacterium tumefaciens (strain C58))).